The sequence spans 120 residues: MARHPGLLLILLAAVAAVATTSRAQWVGGWNVIEDVAGNNQIQRVGAWAVGKHNQLGTNDRLQFVRVVAAEEQVVQGSNYLVVIDAASSRKKTRELYVAVVADLVGATTYQLSSFKLATK.

An N-terminal signal peptide occupies residues 1-24; that stretch reads MARHPGLLLILLAAVAAVATTSRA. The short motif at 73-77 is the Secondary area of contact element; sequence QVVQG.

This sequence belongs to the cystatin family. Phytocystatin subfamily.

Its subcellular location is the secreted. Functionally, specific inhibitor of cysteine proteinases. Probably involved in the regulation of endogenous processes and in defense against pests and pathogens. The sequence is that of Putative cysteine proteinase inhibitor 11 from Oryza sativa subsp. japonica (Rice).